The following is a 23-amino-acid chain: uncharacterized protein (23 aa).

The helical transmembrane segment at 3–23 (YFFMGISFMVIVWAGTFALMI) threads the bilayer.

The protein resides in the cell inner membrane. This is an uncharacterized protein from Escherichia coli (strain K12).